Consider the following 452-residue polypeptide: MKRSKYFGTDGIRGRVGLSPITPDFILKLGWAAGKVLSNYGSGRSKQVIIGKDTRISGYMLESALEAGLAASGLSAALTGPMPTPAIAYLTRTFRAEAGIVISASHNPFYDNGIKFFSIKGTKLDTQVEYFIETELNKCLKCIQPKLLGKAKRIIDAAGRYIEFCKGTFPAHLSLKKLRIVVDCANGATYHIAPNVLRELGADVIAISCNPNGININNKCGSTDIRRLRTQVLLKKADLGIAYDGDGDRVIMVDHIGNKVDGDQMLYILAKEYLYQRKLHGGIVGTWMSNMGLALALRELNIPFVRANVGDRSVLLMLREKGWYIGGENSGHIVLLDKTTTGDGIIVALQILSTMVSNSVSLYELCNNVYLLPQILINVYCSGFINPLESSVVKKEIQIIKQELSDQGRILLRQSGTEPYIRVMVEGKHYSKISYLANRIVSVIKGEMRSVN.

Ser105 acts as the Phosphoserine intermediate in catalysis. The Mg(2+) site is built by Ser105, Asp244, Asp246, and Asp248. A Phosphoserine modification is found at Ser105.

It belongs to the phosphohexose mutase family. Requires Mg(2+) as cofactor. Post-translationally, activated by phosphorylation.

It carries out the reaction alpha-D-glucosamine 1-phosphate = D-glucosamine 6-phosphate. Catalyzes the conversion of glucosamine-6-phosphate to glucosamine-1-phosphate. In Blochmanniella floridana, this protein is Phosphoglucosamine mutase.